The sequence spans 55 residues: Large ribosomal subunit protein bL33 (55 aa).

Belongs to the bacterial ribosomal protein bL33 family.

The chain is Large ribosomal subunit protein bL33 from Bartonella quintana (strain Toulouse) (Rochalimaea quintana).